Reading from the N-terminus, the 262-residue chain is 5'-nucleotidase SurE (262 aa).

D11, D12, S43, and N101 together coordinate a divalent metal cation.

Belongs to the SurE nucleotidase family. The cofactor is a divalent metal cation.

The protein resides in the cytoplasm. It carries out the reaction a ribonucleoside 5'-phosphate + H2O = a ribonucleoside + phosphate. Functionally, nucleotidase that shows phosphatase activity on nucleoside 5'-monophosphates. This Prochlorococcus marinus (strain NATL2A) protein is 5'-nucleotidase SurE.